A 150-amino-acid chain; its full sequence is Monooxygenase nsrS (150 aa).

The protein belongs to the avfA family.

It participates in secondary metabolite biosynthesis. Monooxygenase; part of the gene cluster that mediates the biosynthesis of the tetrahydroxanthone dimer neosartorin, which exhibits antibacterial activity. The two different monomeric units appear to be synthesized by the same set of enzymes, among which the Baeyer-Villiger monooxygenase nsrF is the key enzyme for the divergence of the biosynthetic routes. The pathway begins with the synthesis of atrochrysone thioester by the polyketide synthase nsrB. The atrochrysone carboxyl ACP thioesterase nsrC then breaks the thioester bond and releases the atrochrysone carboxylic acid from AacuL. Atrochrysone carboxylic acid is decarboxylated by the decarboxylase nsrE, and oxidized by the anthrone oxygenase nsrD to yield emodin. Emodin is then reduced to emodin hydroquinone by the oxidoreductase nsrR. A-ring reduction by the short chain dehydrogenase nsrJ, dehydration by the scytalone dehydratase-like protein nsrI and probable spontaneous re-oxidation, results in overall deoxygenation to chrysophanol. The Baeyer-Villiger monooxygenase nsrF accepts chrysophanol as a substrate to insert one oxygen atom at two different positions to yield the precursors of both monomric units. NsrF is promiscuous/flexible in interacting with the 2 (non methylated and methylated) aromatic rings of chrysophanol, thus diverging the biosynthetic pathway at this point. After the hydrolysis of the lactones, methylesterification by the methyltransferase nsrG yields respectively moniliphenone and 2,2',6'-trihydroxy-4-methyl-6-methoxya-cyldiphenylmethanone. The next steps are the hydroxylation by the FAD-dependent monooxygenase nsrK, followed by isomerization by the monooxygenase nsrQ. The short chain dehydrogenase/reductase nsrO then catalyzes the C-5 ketoreduction to give the xanthone skeleton of blennolide C and 5-acetylblennolide A. The acetyltransferase nsrL has a strict substrate specificity and uses only blennolide A but not blennolide C to yield 5-acetylblennolide A as the single-acetylated product. In the final step of the biosynthesis, the heterodimerization of the 2 xanthones, blennolide C and 5-acetylblennolide A, is catalyzed by the cytochrome P450 monooxygenase nsrP. NsrP can utilize at least three different xanthones as its substrates to perform the dimerization reaction. This Aspergillus novofumigatus (strain IBT 16806) protein is Monooxygenase nsrS.